The following is a 439-amino-acid chain: COBRA-like protein 7 (439 aa).

The N-terminal stretch at 1 to 22 is a signal peptide; it reads MDVDQLILFVFVCCLSSRFADA. Asparagine 138, asparagine 181, asparagine 186, asparagine 232, asparagine 312, and asparagine 346 each carry an N-linked (GlcNAc...) asparagine glycan. The GPI-anchor amidated asparagine moiety is linked to residue asparagine 412. A propeptide spans 413 to 439 (removed in mature form); the sequence is GGPDSRVSAAQLIASSCLLLPFIFLIM.

The protein belongs to the COBRA family.

The protein localises to the cell membrane. Its function is as follows. Involved in determining the orientation of cell expansion, probably by playing an important role in cellulose deposition. May act by recruiting cellulose synthesizing complexes to discrete positions on the cell surface. This is COBRA-like protein 7 (BC1LP1) from Oryza sativa subsp. japonica (Rice).